The sequence spans 256 residues: Tryptophan synthase alpha chain (256 aa).

Residues glutamate 45 and aspartate 56 each act as proton acceptor in the active site.

This sequence belongs to the TrpA family. As to quaternary structure, tetramer of two alpha and two beta chains.

It catalyses the reaction (1S,2R)-1-C-(indol-3-yl)glycerol 3-phosphate + L-serine = D-glyceraldehyde 3-phosphate + L-tryptophan + H2O. Its pathway is amino-acid biosynthesis; L-tryptophan biosynthesis; L-tryptophan from chorismate: step 5/5. Its function is as follows. The alpha subunit is responsible for the aldol cleavage of indoleglycerol phosphate to indole and glyceraldehyde 3-phosphate. The polypeptide is Tryptophan synthase alpha chain (Christiangramia forsetii (strain DSM 17595 / CGMCC 1.15422 / KT0803) (Gramella forsetii)).